The following is a 264-amino-acid chain: Thymidylate synthase (264 aa).

DUMP is bound by residues arginine 21 and arginine 126 to arginine 127. Cysteine 146 serves as the catalytic Nucleophile. Residues arginine 166 to aspartate 169, asparagine 177, and histidine 207 to tyrosine 209 each bind dUMP. Residue aspartate 169 coordinates (6R)-5,10-methylene-5,6,7,8-tetrahydrofolate. Alanine 263 contributes to the (6R)-5,10-methylene-5,6,7,8-tetrahydrofolate binding site.

The protein belongs to the thymidylate synthase family. Bacterial-type ThyA subfamily. As to quaternary structure, homodimer.

It is found in the cytoplasm. The enzyme catalyses dUMP + (6R)-5,10-methylene-5,6,7,8-tetrahydrofolate = 7,8-dihydrofolate + dTMP. It participates in pyrimidine metabolism; dTTP biosynthesis. In terms of biological role, catalyzes the reductive methylation of 2'-deoxyuridine-5'-monophosphate (dUMP) to 2'-deoxythymidine-5'-monophosphate (dTMP) while utilizing 5,10-methylenetetrahydrofolate (mTHF) as the methyl donor and reductant in the reaction, yielding dihydrofolate (DHF) as a by-product. This enzymatic reaction provides an intracellular de novo source of dTMP, an essential precursor for DNA biosynthesis. The sequence is that of Thymidylate synthase from Nitrobacter hamburgensis (strain DSM 10229 / NCIMB 13809 / X14).